The chain runs to 452 residues: Phosphatidylinositol N-acetylglucosaminyltransferase GPI3 subunit (452 aa).

The chain crosses the membrane as a helical span at residues 407 to 427 (LYLLCGIVEYMLFFLLEWLYP).

This sequence belongs to the glycosyltransferase group 1 family. As to quaternary structure, component of the phosphatidylinositol N-acetylglucosaminyltransferase complex composed of at least GPI1, GPI2, GPI3, GPI15, GPI19 and ERI1.

It is found in the endoplasmic reticulum membrane. It carries out the reaction a 1,2-diacyl-sn-glycero-3-phospho-(1D-myo-inositol) + UDP-N-acetyl-alpha-D-glucosamine = a 6-(N-acetyl-alpha-D-glucosaminyl)-1-(1,2-diacyl-sn-glycero-3-phospho)-1D-myo-inositol + UDP + H(+). It functions in the pathway glycolipid biosynthesis; glycosylphosphatidylinositol-anchor biosynthesis. With respect to regulation, inhibited by Ras, probably via the interaction between RAS2 and ERI1. Functionally, catalytic subunit in the complex catalyzing the transfer of N-acetylglucosamine from UDP-N-acetylglucosamine to phosphatidylinositol, the first step of GPI biosynthesis. The chain is Phosphatidylinositol N-acetylglucosaminyltransferase GPI3 subunit (SPT14) from Saccharomyces cerevisiae (strain RM11-1a) (Baker's yeast).